Here is a 519-residue protein sequence, read N- to C-terminus: Probable pectinesterase/pectinesterase inhibitor 36 (519 aa).

The first 25 residues, 1–25 (MSTFVKVTDLITIMFFLAIAAVITA), serve as a signal peptide directing secretion. The tract at residues 27–141 (NTAELDVLEM…TFVLHEALAF (115 aa)) is pectinesterase inhibitor 36. Residues asparagine 92 and asparagine 130 are each glycosylated (N-linked (GlcNAc...) asparagine). The interval 147 to 196 (GHMKKRLHGPARQGHGPTRPKHRPTRPNHGPGRSHHGPSRPNQNGGMLVS) is disordered. Basic residues predominate over residues 164 to 184 (TRPKHRPTRPNHGPGRSHHGP). The segment covering 186-196 (RPNQNGGMLVS) has biased composition (polar residues). The segment at 205–505 (DFVVARDGSA…FTVSRFIQGD (301 aa)) is pectinesterase 36. The substrate site is built by threonine 283 and glutamine 313. Aspartate 336 functions as the Proton donor; for pectinesterase activity in the catalytic mechanism. Aspartate 357 functions as the Nucleophile; for pectinesterase activity in the catalytic mechanism. Substrate contacts are provided by arginine 425 and tryptophan 427.

The protein in the N-terminal section; belongs to the PMEI family. This sequence in the C-terminal section; belongs to the pectinesterase family. In terms of tissue distribution, expressed in siliques.

It localises to the secreted. It is found in the cell wall. It carries out the reaction [(1-&gt;4)-alpha-D-galacturonosyl methyl ester](n) + n H2O = [(1-&gt;4)-alpha-D-galacturonosyl](n) + n methanol + n H(+). It participates in glycan metabolism; pectin degradation; 2-dehydro-3-deoxy-D-gluconate from pectin: step 1/5. Acts in the modification of cell walls via demethylesterification of cell wall pectin. In Arabidopsis thaliana (Mouse-ear cress), this protein is Probable pectinesterase/pectinesterase inhibitor 36 (PME36).